Reading from the N-terminus, the 764-residue chain is Myotubularin-related protein 10-B (764 aa).

Positions 208-649 (FESYSDWDRE…THIQIWKLCY (442 aa)) constitute a Myotubularin phosphatase domain.

The protein belongs to the protein-tyrosine phosphatase family. Non-receptor class myotubularin subfamily.

The sequence is that of Myotubularin-related protein 10-B (mtmr10-b) from Xenopus laevis (African clawed frog).